The sequence spans 1893 residues: Nestin (1893 aa).

At methionine 1 the chain carries N-acetylmethionine. A head region spans residues 1 to 7 (MEGCVGE). The tract at residues 8 to 43 (ESFQMWELNRRLEAYLTRVKTLEEQNQLLSAELGGL) is coil 1A. In terms of domain architecture, IF rod spans 8 to 314 (ESFQMWELNR…TLLEAENSRL (307 aa)). Residues 44-55 (RAQSGDTSWRAR) are linker 1. A coil 1B region spans residues 56 to 151 (ADDELASLRI…AAHEEERAHL (96 aa)). The interval 150-172 (HLNAQAACAPRRPPAPPHGSPVR) is disordered. The segment at 152–174 (NAQAACAPRRPPAPPHGSPVRAP) is linker 12. A coil 2A region spans residues 175–193 (EVEDLARRLGEVWRGAVRD). The linker 2 stretch occupies residues 194-196 (YQE). Residues 197-314 (RVAHMESSLG…TLLEAENSRL (118 aa)) are coil 2B. Serine 312 is modified (phosphoserine). Residues 315–1893 (QTPGRGSQAS…DGDSWSSGED (1579 aa)) form a tail region. Position 316 is a phosphothreonine (threonine 316). Phosphoserine is present on residues serine 356 and serine 359. At threonine 389 the chain carries Phosphothreonine. Disordered regions lie at residues 437–479 (PELE…SGSR), 507–529 (NSSA…SQGP), and 556–879 (KENC…NQKS). Positions 507–517 (NSSAQKTQESG) are enriched in polar residues. Serine 562 is modified (phosphoserine). Composition is skewed to basic and acidic residues over residues 572–595 (GPEK…EKTL) and 606–615 (LGKEDTRTED). Serine 620 is modified (phosphoserine). 2 stretches are compositionally biased toward basic and acidic residues: residues 634-646 (ESQE…KEGN) and 670-681 (MLERLVEKEDQS). Serine 685 and serine 729 each carry phosphoserine. 4 stretches are compositionally biased toward basic and acidic residues: residues 717 to 730 (RLIE…LRSP), 761 to 774 (RLIE…LRSA), 802 to 818 (ILER…LRSP), and 846 to 879 (MLER…NQKS). Position 817 is a phosphoserine (serine 817). The residue at position 903 (serine 903) is a Phosphoserine. 2 stretches are compositionally biased toward basic and acidic residues: residues 949 to 966 (LLED…DRNG) and 989 to 1051 (QRIV…KSLE). The disordered stretch occupies residues 949–1130 (LLEDKTHKSL…ARSLGKENQE (182 aa)). Residues serine 1005 and serine 1049 each carry the phosphoserine modification. Residue lysine 1136 forms a Glycyl lysine isopeptide (Lys-Gly) (interchain with G-Cter in SUMO1); alternate linkage. A Glycyl lysine isopeptide (Lys-Gly) (interchain with G-Cter in SUMO2); alternate cross-link involves residue lysine 1136. Phosphoserine occurs at positions 1145 and 1166. Residues 1155 to 1222 (ETAEEDLERR…ELSSLGKWNV (68 aa)) are disordered. Residues 1198–1212 (DENRETLTSLEKESQ) are compositionally biased toward basic and acidic residues. A phosphoserine mark is found at serine 1216 and serine 1229. A disordered region spans residues 1237 to 1263 (EGLQEEQHQESLREVKQELPSSGNQQR). Residues 1241-1253 (EEQHQESLREVKQ) are compositionally biased toward basic and acidic residues. Serine 1322 carries the post-translational modification Phosphoserine. 2 disordered regions span residues 1336 to 1369 (DNLE…EQDS) and 1388 to 1824 (EVVG…SEQV). 2 stretches are compositionally biased toward basic and acidic residues: residues 1354-1363 (VTERDEDRAQ) and 1393-1403 (EDPRHFAREEA). Composition is skewed to acidic residues over residues 1458–1469 (ESMEGWEEEEAS) and 1561–1576 (QDWE…DDLG). Residues serine 1570, serine 1594, serine 1686, serine 1695, serine 1772, and serine 1774 each carry the phosphoserine modification. Positions 1688 to 1709 (GFADEEESGEEGEEEDADEEGA) are enriched in acidic residues. The segment covering 1773–1788 (GSEESESASLEGEEGQ) has biased composition (acidic residues). Residues 1815–1824 (QSPNLDSEQV) show a composition bias toward polar residues. Serine 1866, serine 1889, and serine 1890 each carry phosphoserine. The disordered stretch occupies residues 1870 to 1893 (LGPSQPLKFTLSGVDGDSWSSGED).

It belongs to the intermediate filament family. Forms homodimers and homotetramers in vitro. In mixtures with other intermediate filament proteins such as vimentin and alpha-internexin, this protein preferentially forms heterodimers which can assemble to form intermediate filaments if nestin does not exceed 25%. Interacts with FHOD3. Post-translationally, constitutively phosphorylated. This increases during mitosis when the cytoplasmic intermediate filament network is reorganized. CNS stem cells.

Functionally, required for brain and eye development. Promotes the disassembly of phosphorylated vimentin intermediate filaments (IF) during mitosis and may play a role in the trafficking and distribution of IF proteins and other cellular factors to daughter cells during progenitor cell division. Required for survival, renewal and mitogen-stimulated proliferation of neural progenitor cells. The protein is Nestin (Nes) of Rattus norvegicus (Rat).